The primary structure comprises 149 residues: UPF0178 protein NT01CX_0440 (149 aa).

The protein belongs to the UPF0178 family.

The protein is UPF0178 protein NT01CX_0440 of Clostridium novyi (strain NT).